A 591-amino-acid chain; its full sequence is Probable acetolactate synthase large subunit (591 aa).

Thiamine diphosphate is bound at residue Glu-47. Residues Arg-149, 258-279, and 301-320 each bind FAD; these read HGTK…IGCR and DIDP…IVGD. The segment at 396 to 476 is thiamine pyrophosphate binding; that stretch reads QNQMWMAHFF…VVICIFDNRT (81 aa). Asp-447 and Asn-474 together coordinate Mg(2+).

This sequence belongs to the TPP enzyme family. In terms of assembly, dimer of large and small chains. Mg(2+) serves as cofactor. Thiamine diphosphate is required as a cofactor.

It carries out the reaction 2 pyruvate + H(+) = (2S)-2-acetolactate + CO2. The protein operates within amino-acid biosynthesis; L-isoleucine biosynthesis; L-isoleucine from 2-oxobutanoate: step 1/4. It functions in the pathway amino-acid biosynthesis; L-valine biosynthesis; L-valine from pyruvate: step 1/4. This chain is Probable acetolactate synthase large subunit (ilvB), found in Methanocaldococcus jannaschii (strain ATCC 43067 / DSM 2661 / JAL-1 / JCM 10045 / NBRC 100440) (Methanococcus jannaschii).